We begin with the raw amino-acid sequence, 423 residues long: UDP-N-acetylglucosamine 1-carboxyvinyltransferase (423 aa).

Phosphoenolpyruvate is bound at residue 22-23 (KN). Arg98 lines the UDP-N-acetyl-alpha-D-glucosamine pocket. Cys122 functions as the Proton donor in the catalytic mechanism. Cys122 is subject to 2-(S-cysteinyl)pyruvic acid O-phosphothioketal. Residues 127-131 (RPVDQ), Asp311, and Ile333 each bind UDP-N-acetyl-alpha-D-glucosamine.

It belongs to the EPSP synthase family. MurA subfamily.

Its subcellular location is the cytoplasm. The catalysed reaction is phosphoenolpyruvate + UDP-N-acetyl-alpha-D-glucosamine = UDP-N-acetyl-3-O-(1-carboxyvinyl)-alpha-D-glucosamine + phosphate. Its pathway is cell wall biogenesis; peptidoglycan biosynthesis. In terms of biological role, cell wall formation. Adds enolpyruvyl to UDP-N-acetylglucosamine. In Stenotrophomonas maltophilia (strain K279a), this protein is UDP-N-acetylglucosamine 1-carboxyvinyltransferase.